Here is a 300-residue protein sequence, read N- to C-terminus: Acetylglutamate kinase (300 aa).

Substrate-binding positions include 73–74, Arg95, and Asn197; that span reads GG.

The protein belongs to the acetylglutamate kinase family. ArgB subfamily.

It localises to the cytoplasm. The enzyme catalyses N-acetyl-L-glutamate + ATP = N-acetyl-L-glutamyl 5-phosphate + ADP. The protein operates within amino-acid biosynthesis; L-arginine biosynthesis; N(2)-acetyl-L-ornithine from L-glutamate: step 2/4. In terms of biological role, catalyzes the ATP-dependent phosphorylation of N-acetyl-L-glutamate. This Bordetella bronchiseptica (strain ATCC BAA-588 / NCTC 13252 / RB50) (Alcaligenes bronchisepticus) protein is Acetylglutamate kinase.